Reading from the N-terminus, the 431-residue chain is Methionine aminopeptidase 2-2 (431 aa).

The tract at residues methionine 1–phenylalanine 76 is disordered. Over residues glutamate 35–aspartate 47 the composition is skewed to acidic residues. Histidine 184 provides a ligand contact to substrate. A divalent metal cation-binding residues include aspartate 204, aspartate 215, and histidine 284. Histidine 292 lines the substrate pocket. A divalent metal cation contacts are provided by glutamate 317 and glutamate 412.

The protein belongs to the peptidase M24A family. Methionine aminopeptidase eukaryotic type 2 subfamily. Requires Co(2+) as cofactor. Zn(2+) serves as cofactor. Mn(2+) is required as a cofactor. The cofactor is Fe(2+).

The protein localises to the cytoplasm. It catalyses the reaction Release of N-terminal amino acids, preferentially methionine, from peptides and arylamides.. Functionally, cotranslationally removes the N-terminal methionine from nascent proteins. The N-terminal methionine is often cleaved when the second residue in the primary sequence is small and uncharged (Met-Ala-, Cys, Gly, Pro, Ser, Thr, or Val). The sequence is that of Methionine aminopeptidase 2-2 from Aspergillus niger (strain ATCC MYA-4892 / CBS 513.88 / FGSC A1513).